The chain runs to 156 residues: Small ribosomal subunit protein uS7 (156 aa).

The protein belongs to the universal ribosomal protein uS7 family. In terms of assembly, part of the 30S ribosomal subunit. Contacts proteins S9 and S11.

One of the primary rRNA binding proteins, it binds directly to 16S rRNA where it nucleates assembly of the head domain of the 30S subunit. Is located at the subunit interface close to the decoding center, probably blocks exit of the E-site tRNA. The chain is Small ribosomal subunit protein uS7 from Cupriavidus necator (strain ATCC 17699 / DSM 428 / KCTC 22496 / NCIMB 10442 / H16 / Stanier 337) (Ralstonia eutropha).